The chain runs to 868 residues: Protein translocase subunit SecA (868 aa).

Residues Gln-88, 106–110, and Asp-509 each bind ATP; that span reads GEGKT. A compositionally biased stretch (polar residues) spans 816–827; sequence NAENEPLNYNNQ. Residues 816–868 form a disordered region; that stretch reads NAENEPLNYNNQGEDENFTPEKKIPRNAPCPCGSGKKYKDCHGKSGPKKGIFA. Positions 845, 847, 856, and 857 each coordinate Zn(2+).

It belongs to the SecA family. In terms of assembly, monomer and homodimer. Part of the essential Sec protein translocation apparatus which comprises SecA, SecYEG and auxiliary proteins SecDF-YajC and YidC. The cofactor is Zn(2+).

The protein resides in the cell inner membrane. It localises to the cytoplasm. It catalyses the reaction ATP + H2O + cellular proteinSide 1 = ADP + phosphate + cellular proteinSide 2.. Part of the Sec protein translocase complex. Interacts with the SecYEG preprotein conducting channel. Has a central role in coupling the hydrolysis of ATP to the transfer of proteins into and across the cell membrane, serving as an ATP-driven molecular motor driving the stepwise translocation of polypeptide chains across the membrane. The sequence is that of Protein translocase subunit SecA from Campylobacter concisus (strain 13826).